The primary structure comprises 749 residues: Taperin (749 aa).

A disordered region spans residues 144-348 (PAAPCRRGSP…IRPSSKPDME (205 aa)). 3 stretches are compositionally biased toward polar residues: residues 169–179 (SAATRTPTNRS), 230–239 (LQKTGSNSFT), and 250–266 (VNRSLSNGPMTQESPTG). Residue serine 274 is modified to Phosphoserine. Over residues 323–335 (QRQWVSSATSAND) the composition is skewed to polar residues. The segment covering 337–347 (FEIRPSSKPDM) has biased composition (basic and acidic residues). Phosphoserine is present on residues serine 401, serine 457, and serine 501. 3 disordered regions span residues 502–586 (EEEA…TTLE), 636–673 (FEYPSESSLAQEEAEEEEEEEGEEDGEEEEVGPDSEKP), and 730–749 (LTPASQNDLSDFRSEPALYF). Polar residues-rich tracts occupy residues 534–544 (ELLNRGSNTFT) and 558–570 (HLSQTNGQSQQGA). The segment covering 647-668 (EEAEEEEEEEGEEDGEEEEVGP) has biased composition (acidic residues).

It belongs to the taperin family. As to quaternary structure, interacts with GRXCR2; the interaction restricts TPRN to the stereocilum basal region. Interacts with actin ACTB; the interaction may stabilize stereocilia. Interacts with CLIC5. Interacts with PTPRQ. TPRN, CLIC5 and PTPQR form concentric rings at the base of stereocilia and may form a complex. Interacts with phosphatase PPP1CA; the interaction results in inhibition of PPP1CA phosphatase activity. Interacts with DNA damage response proteins XRCC6/KU70, XRCC5/KU80, PARP1, TOP1 and TOP2A; these interactions recruit TPRN to sites of DNA damage where it may play a role in DNA repair. In the organ of Corti, expressed in the inner ear hair cell stereocilia and the supporting cells (at protein level). Expressed in the sensory epithelia of the organ of Corti and vestibular end organs and, to a lesser extent, in Reisner's membrane and the spiral ligament (at protein level). At postnatal day 2, expression is detected in cochlea, liver, brain, kidney, heart and lung.

The protein localises to the cell projection. The protein resides in the stereocilium. It is found in the microvillus. It localises to the nucleus. Its subcellular location is the nucleoplasm. The protein localises to the cytoplasm. Essential for hearing. Required for maintenance of stereocilia on both inner and outer hair cells. Necessary for the integrity of the stereociliary rootlet. May act as an actin cytoskeleton regulator involved in the regulation of actin dynamics at the pointed end in hair cells. Forms rings at the base of stereocilia and binds actin filaments in the stereocilia which may stabilize the stereocilia. Acts as a strong inhibitor of PPP1CA phosphatase activity. Recruited to sites of DNA damage and may play a role in DNA damage repair. The chain is Taperin (Tprn) from Mus musculus (Mouse).